The chain runs to 465 residues: Asparagine--tRNA ligase (465 aa).

It belongs to the class-II aminoacyl-tRNA synthetase family. As to quaternary structure, homodimer.

The protein resides in the cytoplasm. It catalyses the reaction tRNA(Asn) + L-asparagine + ATP = L-asparaginyl-tRNA(Asn) + AMP + diphosphate + H(+). The protein is Asparagine--tRNA ligase of Hahella chejuensis (strain KCTC 2396).